Here is a 77-residue protein sequence, read N- to C-terminus: Putative snRNP Sm-like protein (77 aa).

Residues 8–77 (PTLRMMLDYV…DSVVVITPAA (70 aa)) form the Sm domain.

Belongs to the snRNP Sm proteins family.

This is Putative snRNP Sm-like protein from Aeropyrum pernix (strain ATCC 700893 / DSM 11879 / JCM 9820 / NBRC 100138 / K1).